A 498-amino-acid chain; its full sequence is Putative antiporter subunit mnhD2 (498 aa).

The next 14 helical transmembrane spans lie at 2–22, 32–52, 78–98, 108–128, 130–150, 161–181, 209–229, 240–260, 271–291, 308–328, 330–350, 369–389, 406–426, and 451–471; these read LSNL…ILVF, YLYL…LIYV, LSLI…AYGF, YHLP…FLTS, LFNL…LITL, IIYV…IGLL, ISLI…FMWL, LAAL…IRFF, IHPL…IGVI, IGFI…GAIF, LVND…LVYI, FGVA…FSGF, IGLA…FRIF, and ILSI…VVLN.

This sequence belongs to the CPA3 antiporters (TC 2.A.63) subunit D family. May form a heterooligomeric complex that consists of seven subunits: mnhA2, mnhB2, mnhC2, mnhD2, mnhE2, mnhF2 and mnhG2.

It is found in the cell membrane. The chain is Putative antiporter subunit mnhD2 (mnhD2) from Staphylococcus aureus (strain Mu3 / ATCC 700698).